The primary structure comprises 343 residues: Glycerol-3-phosphate dehydrogenase [NAD(P)+] (343 aa).

Serine 22, tyrosine 23, histidine 43, and lysine 117 together coordinate NADPH. The sn-glycerol 3-phosphate site is built by lysine 117, glycine 146, and threonine 148. Residue alanine 150 coordinates NADPH. Sn-glycerol 3-phosphate contacts are provided by lysine 202, aspartate 255, serine 265, arginine 266, and asparagine 267. Residue lysine 202 is the Proton acceptor of the active site. Arginine 266 is an NADPH binding site. Positions 290 and 292 each coordinate NADPH.

It belongs to the NAD-dependent glycerol-3-phosphate dehydrogenase family.

It is found in the cytoplasm. It carries out the reaction sn-glycerol 3-phosphate + NAD(+) = dihydroxyacetone phosphate + NADH + H(+). It catalyses the reaction sn-glycerol 3-phosphate + NADP(+) = dihydroxyacetone phosphate + NADPH + H(+). The protein operates within membrane lipid metabolism; glycerophospholipid metabolism. Functionally, catalyzes the reduction of the glycolytic intermediate dihydroxyacetone phosphate (DHAP) to sn-glycerol 3-phosphate (G3P), the key precursor for phospholipid synthesis. This chain is Glycerol-3-phosphate dehydrogenase [NAD(P)+], found in Aliivibrio fischeri (strain ATCC 700601 / ES114) (Vibrio fischeri).